A 426-amino-acid polypeptide reads, in one-letter code: MQNQRLIKQQQQQQQQQHQQAMIQQAMMQQHPSLYHPGVMAPPQMEPLPSGNLPPGFDPTTCRSVYAGNIHTQVTEILLQEIFASTGPIESCKLIRKDKSSYGFVHYFDRRCASMAIMTLNGRHIFGQPMKVNWAYATGQREDTSSHFNIFVGDLSPEVTDAALFDSFSAFNSCSDARVMWDQKTGRSRGFGFVSFRNQQDAQTAINEMNGKWVSSRQIRCNWATKGATFGEDKHSSDGKSVVELTNGSSEDGRELSNEDAPENNPQFTTVYVGNLSPEVTQLDLHRLFYTLGAGVIEEVRVQRDKGFGFVRYNTHDEAALAIQMGNAQPFLFSRQIRCSWGNKPTPSGTASNPLPPPAPASVPSLSAMDLLAYERQLALAKMHPQAQHSLRQAGLGVNVAGGTAAMYDGGYQNVAAAHQQLMYYQ.

Positions 1–26 (MQNQRLIKQQQQQQQQQHQQAMIQQA) are disordered. Over residues 9–26 (QQQQQQQQQHQQAMIQQA) the composition is skewed to low complexity. 2 consecutive RRM domains span residues 63-137 (RSVY…WAYA) and 148-226 (FNIF…WATK). The disordered stretch occupies residues 230 to 268 (FGEDKHSSDGKSVVELTNGSSEDGRELSNEDAPENNPQF). A Phosphoserine modification is found at Ser-250. In terms of domain architecture, RRM 3 spans 269-344 (TTVYVGNLSP…RQIRCSWGNK (76 aa)).

As to quaternary structure, interacts with UBA1A and UBA2A.

It localises to the nucleus. Its function is as follows. Heterogeneous nuclear ribonucleoprotein (hnRNP)-like protein that acts as a component of the pre-mRNA processing machinery. Functions to facilitate the nuclear maturation of plant pre-mRNAs. This is Oligouridylate-binding protein 1A (UBP1A) from Arabidopsis thaliana (Mouse-ear cress).